Consider the following 82-residue polypeptide: Beta-neurotoxin Css9 (82 aa).

Positions 1-17 (MKLLMLIVALMIIGVQS) are cleaved as a signal peptide. Residues 18–81 (KDGYPMDHKG…VWDRATNKCR (64 aa)) enclose the LCN-type CS-alpha/beta domain. 4 cysteine pairs are disulfide-bonded: cysteine 28-cysteine 80, cysteine 32-cysteine 54, cysteine 39-cysteine 61, and cysteine 43-cysteine 63.

This sequence belongs to the long (4 C-C) scorpion toxin superfamily. Sodium channel inhibitor family. Beta subfamily. As to expression, expressed by the venom gland.

The protein localises to the secreted. Functionally, beta toxins bind voltage-independently at site-4 of sodium channels (Nav) and shift the voltage of activation toward more negative potentials thereby affecting sodium channel activation and promoting spontaneous and repetitive firing. This toxin compete with high affinity with 125I-Css4 bound on rat brain synaptosome and may bind with high affinity to Nav1.1/SCN1A, Nav1.2/SCN2A and Nav1.6/SCN8A. The sequence is that of Beta-neurotoxin Css9 from Centruroides suffusus (Durango bark scorpion).